Here is a 372-residue protein sequence, read N- to C-terminus: N-methyl-L-tryptophan oxidase (372 aa).

4-34 (DLIIIGSGSVGAAAGYYATRAGLNVLMTDAH) serves as a coordination point for FAD. At C308 the chain carries S-8alpha-FAD cysteine.

It belongs to the MSOX/MTOX family. MTOX subfamily. As to quaternary structure, monomer. It depends on FAD as a cofactor.

The enzyme catalyses N(alpha)-methyl-L-tryptophan + O2 + H2O = L-tryptophan + formaldehyde + H2O2. Functionally, catalyzes the oxidative demethylation of N-methyl-L-tryptophan. The polypeptide is N-methyl-L-tryptophan oxidase (Escherichia coli O6:H1 (strain CFT073 / ATCC 700928 / UPEC)).